The chain runs to 342 residues: Heat-inducible transcription repressor HrcA (342 aa).

The protein belongs to the HrcA family.

In terms of biological role, negative regulator of class I heat shock genes (grpE-dnaK-dnaJ and groELS operons). Prevents heat-shock induction of these operons. This is Heat-inducible transcription repressor HrcA from Methylibium petroleiphilum (strain ATCC BAA-1232 / LMG 22953 / PM1).